Here is a 141-residue protein sequence, read N- to C-terminus: D-aminoacyl-tRNA deacylase (141 aa).

The Gly-cisPro motif, important for rejection of L-amino acids motif lies at 133 to 134; that stretch reads GP.

It belongs to the DTD family. Homodimer.

The protein localises to the cytoplasm. It carries out the reaction glycyl-tRNA(Ala) + H2O = tRNA(Ala) + glycine + H(+). It catalyses the reaction a D-aminoacyl-tRNA + H2O = a tRNA + a D-alpha-amino acid + H(+). In terms of biological role, an aminoacyl-tRNA editing enzyme that deacylates mischarged D-aminoacyl-tRNAs. Also deacylates mischarged glycyl-tRNA(Ala), protecting cells against glycine mischarging by AlaRS. Acts via tRNA-based rather than protein-based catalysis; rejects L-amino acids rather than detecting D-amino acids in the active site. By recycling D-aminoacyl-tRNA to D-amino acids and free tRNA molecules, this enzyme counteracts the toxicity associated with the formation of D-aminoacyl-tRNA entities in vivo and helps enforce protein L-homochirality. The sequence is that of D-aminoacyl-tRNA deacylase from Kineococcus radiotolerans (strain ATCC BAA-149 / DSM 14245 / SRS30216).